A 395-amino-acid polypeptide reads, in one-letter code: ATP phosphoribosyltransferase regulatory subunit (395 aa).

Belongs to the class-II aminoacyl-tRNA synthetase family. HisZ subfamily. As to quaternary structure, heteromultimer composed of HisG and HisZ subunits.

The protein localises to the cytoplasm. It participates in amino-acid biosynthesis; L-histidine biosynthesis; L-histidine from 5-phospho-alpha-D-ribose 1-diphosphate: step 1/9. Required for the first step of histidine biosynthesis. May allow the feedback regulation of ATP phosphoribosyltransferase activity by histidine. The chain is ATP phosphoribosyltransferase regulatory subunit from Pseudomonas syringae pv. tomato (strain ATCC BAA-871 / DC3000).